The sequence spans 328 residues: Eukaryotic translation initiation factor 3 subunit I (328 aa).

5 WD repeats span residues 8 to 49 (GHER…GTYR), 50 to 89 (GHNG…ELFT), 146 to 185 (DGKK…LLKQ), 191 to 230 (GHKK…LLKT), and 288 to 327 (GHFG…FNIK).

It belongs to the eIF-3 subunit I family. Component of the eukaryotic translation initiation factor 3 (eIF-3) complex.

The protein localises to the cytoplasm. In terms of biological role, component of the eukaryotic translation initiation factor 3 (eIF-3) complex, which is involved in protein synthesis of a specialized repertoire of mRNAs and, together with other initiation factors, stimulates binding of mRNA and methionyl-tRNAi to the 40S ribosome. The eIF-3 complex specifically targets and initiates translation of a subset of mRNAs involved in cell proliferation. This is Eukaryotic translation initiation factor 3 subunit I (TIF3I1) from Arabidopsis thaliana (Mouse-ear cress).